The following is a 105-amino-acid chain: uncharacterized protein (105 aa).

This is an uncharacterized protein from Homo sapiens (Human).